The primary structure comprises 434 residues: Maltoporin (434 aa).

Residues 1–25 form the signal peptide; sequence MMTTLRKLPLALAIAAGVLTTQAMA.

It belongs to the porin LamB (TC 1.B.3) family. As to quaternary structure, homotrimer formed of three 18-stranded antiparallel beta-barrels, containing three independent channels.

Its subcellular location is the cell outer membrane. The enzyme catalyses beta-maltose(in) = beta-maltose(out). Functionally, involved in the transport of maltose and maltodextrins. The chain is Maltoporin from Serratia proteamaculans (strain 568).